The primary structure comprises 515 residues: Probable malate:quinone oxidoreductase (515 aa).

This sequence belongs to the MQO family. Requires FAD as cofactor.

It carries out the reaction (S)-malate + a quinone = a quinol + oxaloacetate. It functions in the pathway carbohydrate metabolism; tricarboxylic acid cycle; oxaloacetate from (S)-malate (quinone route): step 1/1. This Blochmanniella pennsylvanica (strain BPEN) protein is Probable malate:quinone oxidoreductase.